The sequence spans 361 residues: Phosphoserine aminotransferase (361 aa).

R43 contacts L-glutamate. Residues 77–78 (AS), W103, T153, D173, and Q196 contribute to the pyridoxal 5'-phosphate site. Residue K197 is modified to N6-(pyridoxal phosphate)lysine. Residue 238–239 (NT) participates in pyridoxal 5'-phosphate binding.

The protein belongs to the class-V pyridoxal-phosphate-dependent aminotransferase family. SerC subfamily. In terms of assembly, homodimer. Pyridoxal 5'-phosphate is required as a cofactor.

It is found in the cytoplasm. The enzyme catalyses O-phospho-L-serine + 2-oxoglutarate = 3-phosphooxypyruvate + L-glutamate. It catalyses the reaction 4-(phosphooxy)-L-threonine + 2-oxoglutarate = (R)-3-hydroxy-2-oxo-4-phosphooxybutanoate + L-glutamate. It participates in amino-acid biosynthesis; L-serine biosynthesis; L-serine from 3-phospho-D-glycerate: step 2/3. Its pathway is cofactor biosynthesis; pyridoxine 5'-phosphate biosynthesis; pyridoxine 5'-phosphate from D-erythrose 4-phosphate: step 3/5. Its function is as follows. Catalyzes the reversible conversion of 3-phosphohydroxypyruvate to phosphoserine and of 3-hydroxy-2-oxo-4-phosphonooxybutanoate to phosphohydroxythreonine. This is Phosphoserine aminotransferase from Ectopseudomonas mendocina (strain ymp) (Pseudomonas mendocina).